A 70-amino-acid chain; its full sequence is MGAIAAGIAMFGAAIGGGIGDGIVVAKMLEGMARQPELSGQLRTTMFIGVGLVEAMPILAFVISLLVMNK.

2 helical membrane passes run 4–24 and 47–67; these read IAAGIAMFGAAIGGGIGDGIV and FIGVGLVEAMPILAFVISLLV.

It belongs to the ATPase C chain family. F-type ATPases have 2 components, F(1) - the catalytic core - and F(0) - the membrane proton channel. F(1) has five subunits: alpha(3), beta(3), gamma(1), delta(1), epsilon(1). F(0) has three main subunits: a(1), b(2) and c(10-14). The alpha and beta chains form an alternating ring which encloses part of the gamma chain. F(1) is attached to F(0) by a central stalk formed by the gamma and epsilon chains, while a peripheral stalk is formed by the delta and b chains.

It is found in the cell membrane. Functionally, f(1)F(0) ATP synthase produces ATP from ADP in the presence of a proton or sodium gradient. F-type ATPases consist of two structural domains, F(1) containing the extramembraneous catalytic core and F(0) containing the membrane proton channel, linked together by a central stalk and a peripheral stalk. During catalysis, ATP synthesis in the catalytic domain of F(1) is coupled via a rotary mechanism of the central stalk subunits to proton translocation. Its function is as follows. Key component of the F(0) channel; it plays a direct role in translocation across the membrane. A homomeric c-ring of between 10-14 subunits forms the central stalk rotor element with the F(1) delta and epsilon subunits. The chain is ATP synthase subunit c from Pediococcus pentosaceus (strain ATCC 25745 / CCUG 21536 / LMG 10740 / 183-1w).